Reading from the N-terminus, the 250-residue chain is Pyrroloquinoline-quinone synthase (250 aa).

It belongs to the PqqC family.

The catalysed reaction is 6-(2-amino-2-carboxyethyl)-7,8-dioxo-1,2,3,4,7,8-hexahydroquinoline-2,4-dicarboxylate + 3 O2 = pyrroloquinoline quinone + 2 H2O2 + 2 H2O + H(+). The protein operates within cofactor biosynthesis; pyrroloquinoline quinone biosynthesis. In terms of biological role, ring cyclization and eight-electron oxidation of 3a-(2-amino-2-carboxyethyl)-4,5-dioxo-4,5,6,7,8,9-hexahydroquinoline-7,9-dicarboxylic-acid to PQQ. The polypeptide is Pyrroloquinoline-quinone synthase (Ectopseudomonas mendocina (strain ymp) (Pseudomonas mendocina)).